The following is a 119-amino-acid chain: MKKTYRVKREKDFQAIFKDGKSTANRKFVIYHLNRGQDHFRVGISVGKKIGNAVTRNAVKRKIRHVIMALGHQLKSEDFVVIARKGVESLEYQELQQNLHHVLKLAQLLEKGFESEEKH.

This sequence belongs to the RnpA family. Consists of a catalytic RNA component (M1 or rnpB) and a protein subunit.

It catalyses the reaction Endonucleolytic cleavage of RNA, removing 5'-extranucleotides from tRNA precursor.. Functionally, RNaseP catalyzes the removal of the 5'-leader sequence from pre-tRNA to produce the mature 5'-terminus. It can also cleave other RNA substrates such as 4.5S RNA. The protein component plays an auxiliary but essential role in vivo by binding to the 5'-leader sequence and broadening the substrate specificity of the ribozyme. This Streptococcus pyogenes serotype M1 protein is Ribonuclease P protein component.